The chain runs to 250 residues: uncharacterized protein (250 aa).

This is an uncharacterized protein from Sulfolobus islandicus filamentous virus (isolate Iceland/Hveragerdi) (SIFV).